Here is a 525-residue protein sequence, read N- to C-terminus: Glutamate--cysteine ligase (525 aa).

The protein belongs to the glutamate--cysteine ligase type 1 family. Type 1 subfamily.

The catalysed reaction is L-cysteine + L-glutamate + ATP = gamma-L-glutamyl-L-cysteine + ADP + phosphate + H(+). Its pathway is sulfur metabolism; glutathione biosynthesis; glutathione from L-cysteine and L-glutamate: step 1/2. This Pseudomonas putida (strain W619) protein is Glutamate--cysteine ligase.